The chain runs to 609 residues: Wee1-like protein kinase (609 aa).

Residues 1–10 show a composition bias toward basic and acidic residues; the sequence is MAFRQSEHEM. Disordered stretches follow at residues 1–88 and 147–166; these read MAFR…SMSP and PLHNRKLPTQDTANVNPFTP. S23, S25, and S27 each carry phosphoserine. Residues 37-48 show a composition bias toward basic and acidic residues; sequence RFADDDFDKDTP. Position 47 is a phosphothreonine (T47). S52 is modified (phosphoserine). The segment covering 153–165 has biased composition (polar residues); sequence LPTQDTANVNPFT. T165 bears the Phosphothreonine mark. Phosphoserine is present on S168. One can recognise a Protein kinase domain in the interval 239-517; it reads FMQVNVIGVG…SQSIFSHPIL (279 aa). ATP is bound by residues 245–253 and K268; that span reads IGVGEFGVV. The active-site Proton acceptor is D361. 2 residues coordinate Mg(2+): N366 and D412.

This sequence belongs to the protein kinase superfamily. Ser/Thr protein kinase family. WEE1 subfamily. Requires Mg(2+) as cofactor. Post-translationally, phosphorylated during M and G1 phases. Expressed in embryos; expression remains high in the proliferating cells of the central nervous system well after cells in the rest of the embryo have ceased dividing.

The protein resides in the nucleus. The catalysed reaction is L-tyrosyl-[protein] + ATP = O-phospho-L-tyrosyl-[protein] + ADP + H(+). With respect to regulation, negatively regulated by phosphorylation in the M-phase. In terms of biological role, acts as a negative regulator of entry into mitosis (G2 to M transition). This kinase specifically phosphorylates and inactivates cyclin B1-complexed CDC2. The chain is Wee1-like protein kinase from Drosophila melanogaster (Fruit fly).